Here is a 129-residue protein sequence, read N- to C-terminus: Phosphoribosyl-AMP cyclohydrolase (129 aa).

Asp85 is a binding site for Mg(2+). Residue Cys86 participates in Zn(2+) binding. Positions 87 and 89 each coordinate Mg(2+). Residues Cys102 and Cys109 each coordinate Zn(2+).

Belongs to the PRA-CH family. In terms of assembly, homodimer. It depends on Mg(2+) as a cofactor. Requires Zn(2+) as cofactor.

It is found in the cytoplasm. It catalyses the reaction 1-(5-phospho-beta-D-ribosyl)-5'-AMP + H2O = 1-(5-phospho-beta-D-ribosyl)-5-[(5-phospho-beta-D-ribosylamino)methylideneamino]imidazole-4-carboxamide. It participates in amino-acid biosynthesis; L-histidine biosynthesis; L-histidine from 5-phospho-alpha-D-ribose 1-diphosphate: step 3/9. Its function is as follows. Catalyzes the hydrolysis of the adenine ring of phosphoribosyl-AMP. The polypeptide is Phosphoribosyl-AMP cyclohydrolase (Methanococcus maripaludis (strain C5 / ATCC BAA-1333)).